A 157-amino-acid polypeptide reads, in one-letter code: Small ribosomal subunit protein bS16 (157 aa).

Positions Lys125–Ala141 are enriched in basic and acidic residues. The interval Lys125–Glu157 is disordered. A compositionally biased stretch (acidic residues) spans Glu142 to Glu157.

The protein belongs to the bacterial ribosomal protein bS16 family.

In Corynebacterium kroppenstedtii (strain DSM 44385 / JCM 11950 / CIP 105744 / CCUG 35717), this protein is Small ribosomal subunit protein bS16.